We begin with the raw amino-acid sequence, 456 residues long: MSSMASVLFAALAISGVQVTPSRGYGCFPQYSQFWGQYSPYFSLEGRSAISSAVPPGCKITFAQSLQRHGARFPTADKSATYSSLIKRIQEDATEFKDEFAFLKDYKYNLGADDLTPFGESQLYDSGINFFQRYHGLTKDSKVFVRSAGSERVVASAHKFVEGFNKAKGSEKGGATKLDLIISEEDRRKNPIAPQGCDAFDNDETADKITDQFRSTFTQPIVDRVNKKLPGANIKIGDIKSLMAMCPFDTVARTPDASKLSPFCHLFSHEEFRHYDYLETLGKFYGHGPGNSFGPAPGIGYVNELIARLTSSPVKDNTTVDHELDDNPKTFPLGLPLYADFSHDNSMTVIFTAMGLFNATKPLSPTKITDPADASGYSASWTVPFGARAYFEKMVCDHSPSAKQEYVRVLLNDRVFPLQDCHTDFLGRCKLDDFINGLTYARSNGNWDQCEVSPPK.

Positions 1 to 24 are cleaved as a signal peptide; it reads MSSMASVLFAALAISGVQVTPSRG. The 1D-myo-inositol hexakisphosphate site is built by Gln-37, Tyr-38, Arg-68, His-69, Arg-72, Thr-75, and Arg-152. 4 disulfide bridges follow: Cys-58-Cys-396, Cys-197-Cys-450, Cys-246-Cys-264, and Cys-421-Cys-429. Residue His-69 is the Nucleophile of the active site. Lys-283 contributes to the 1D-myo-inositol hexakisphosphate binding site. A glycan (N-linked (GlcNAc...) asparagine) is linked at Asn-317. Residues His-343 and Asp-344 each contribute to the 1D-myo-inositol hexakisphosphate site. N-linked (GlcNAc...) asparagine glycosylation is present at Asn-358.

It belongs to the histidine acid phosphatase family. As to quaternary structure, monomer.

It is found in the secreted. The catalysed reaction is 1D-myo-inositol hexakisphosphate + H2O = 1D-myo-inositol 1,2,4,5,6-pentakisphosphate + phosphate. The enzyme catalyses 1D-myo-inositol 1,2,4,5,6-pentakisphosphate + H2O = 1D-myo-inositol 1,2,5,6-tetrakisphosphate + phosphate. It carries out the reaction 1D-myo-inositol 1,2,5,6-tetrakisphosphate + H2O = 1D-myo-inositol 1,2,6-trisphosphate + phosphate. It catalyses the reaction 1D-myo-inositol 1,2,6-trisphosphate + H2O = 1D-myo-inositol 1,2-bisphosphate + phosphate. The catalysed reaction is 1D-myo-inositol 1,2-bisphosphate + H2O = 1D-myo-inositol 2-phosphate + phosphate. Its function is as follows. Catalyzes the phosphate monoester hydrolysis of phytic acid (myo-inositol hexakisphosphate), which results in the stepwise formation of myo-inositol pentakis-, tetrakis-, tris-, bis-, and monophosphates, as well as the liberation of inorganic phosphate. Myo-inositol 2-monophosphate is the end product. The sequence is that of Phytase A from Arthroderma benhamiae (strain ATCC MYA-4681 / CBS 112371) (Trichophyton mentagrophytes).